The primary structure comprises 129 residues: NADH-quinone oxidoreductase subunit A (129 aa).

A run of 3 helical transmembrane segments spans residues 14 to 34 (LAIHVALSAGIVAAIIVVAAL), 67 to 87 (FLIAALFVIFDMEVAILFAWA), and 95 to 115 (WFGLIEAAVFIGVLLLALVYL).

The protein belongs to the complex I subunit 3 family. As to quaternary structure, NDH-1 is composed of 14 different subunits. Subunits NuoA, H, J, K, L, M, N constitute the membrane sector of the complex.

It is found in the cell inner membrane. It carries out the reaction a quinone + NADH + 5 H(+)(in) = a quinol + NAD(+) + 4 H(+)(out). Its function is as follows. NDH-1 shuttles electrons from NADH, via FMN and iron-sulfur (Fe-S) centers, to quinones in the respiratory chain. The immediate electron acceptor for the enzyme in this species is believed to be ubiquinone. Couples the redox reaction to proton translocation (for every two electrons transferred, four hydrogen ions are translocated across the cytoplasmic membrane), and thus conserves the redox energy in a proton gradient. The polypeptide is NADH-quinone oxidoreductase subunit A (Rhodopseudomonas palustris (strain HaA2)).